A 1058-amino-acid polypeptide reads, in one-letter code: Ubiquitin-like modifier-activating enzyme 1 (1058 aa).

A disordered region spans residues 1-47 (MSSSPLSKKRRVSGPDPKPGSNCSPAQSVLPQVPSAPTNGMAKNGSE). The residue at position 2 (Ser2) is an N-acetylserine. Phosphoserine is present on residues Ser4, Ser13, Ser21, Ser24, and Ser46. Residues 21–38 (SNCSPAQSVLPQVPSAPT) show a composition bias toward polar residues. At Tyr55 the chain carries Phosphotyrosine. 2 tandem repeats follow at residues 63–199 (GHEA…GQLF) and 459–611 (GSDL…QVVI). A 2 approximate repeats region spans residues 63 to 611 (GHEAMKRLQT…GTKGNVQVVI (549 aa)). Residues Ala478, Asp504, Arg515, Lys528, and 576–577 (DN) each bind ATP. Position 528 is an N6-succinyllysine (Lys528). The active-site Glycyl thioester intermediate is the Cys632. Residue Lys671 is modified to N6-acetyllysine. Thr800 carries the phosphothreonine modification. Phosphoserine is present on residues Ser810, Ser816, Ser820, and Ser835. Lys980 bears the N6-acetyllysine mark.

Belongs to the ubiquitin-activating E1 family. As to quaternary structure, monomer. In terms of tissue distribution, ubiquitous.

It localises to the cytoplasm. The protein resides in the mitochondrion. The protein localises to the nucleus. It catalyses the reaction ATP + ubiquitin + [E1 ubiquitin-activating enzyme]-L-cysteine = AMP + diphosphate + S-ubiquitinyl-[E1 ubiquitin-activating enzyme]-L-cysteine.. It participates in protein modification; protein ubiquitination. Its function is as follows. Catalyzes the first step in ubiquitin conjugation to mark cellular proteins for degradation through the ubiquitin-proteasome system. Activates ubiquitin by first adenylating its C-terminal glycine residue with ATP, and thereafter linking this residue to the side chain of a cysteine residue in E1, yielding a ubiquitin-E1 thioester and free AMP. Essential for the formation of radiation-induced foci, timely DNA repair and for response to replication stress. Promotes the recruitment of TP53BP1 and BRCA1 at DNA damage sites. In Oryctolagus cuniculus (Rabbit), this protein is Ubiquitin-like modifier-activating enzyme 1 (UBA1).